The primary structure comprises 462 residues: Cathepsin F (462 aa).

An N-terminal signal peptide occupies residues 1 to 19; it reads MAPLLQLLWLLTLLSTVAL. Residues 20 to 248 constitute a propeptide, activation peptide; sequence SPVPAKPWAD…MSPAKSINDL (229 aa). N-linked (GlcNAc...) asparagine glycosylation is found at Asn35, Asn138, and Asn173. Cystine bridges form between Cys270–Cys311 and Cys304–Cys344. Cys273 is a catalytic residue. Asn345 and Asn356 each carry an N-linked (GlcNAc...) asparagine glycan. A disulfide bond links Cys402 and Cys450. Residue His409 is part of the active site. The N-linked (GlcNAc...) asparagine glycan is linked to Asn418. Asn429 is a catalytic residue.

This sequence belongs to the peptidase C1 family.

The protein resides in the lysosome. The catalysed reaction is The recombinant enzyme cleaves synthetic substrates with Phe and Leu (better than Val) in P2, with high specificity constant (kcat/Km) comparable to that of cathepsin L.. In terms of biological role, thiol protease which is believed to participate in intracellular degradation and turnover of proteins. Has also been implicated in tumor invasion and metastasis. This chain is Cathepsin F (Ctsf), found in Mus musculus (Mouse).